Here is a 61-residue protein sequence, read N- to C-terminus: DGYIKKSKGCKVSCVINNVYCNSMCKSLGGSYGYCWTYGLACWCEGLPNAKRWKYETKTCK.

In terms of domain architecture, LCN-type CS-alpha/beta spans 1–61 (DGYIKKSKGC…RWKYETKTCK (61 aa)). 4 disulfide bridges follow: Cys-10–Cys-60, Cys-14–Cys-35, Cys-21–Cys-42, and Cys-25–Cys-44.

This sequence belongs to the long (4 C-C) scorpion toxin superfamily. Sodium channel inhibitor family. Beta subfamily. As to expression, expressed by the venom gland.

It is found in the secreted. Depressant insect beta-toxins cause a transient contraction paralysis followed by a slow flaccid paralysis. They bind voltage-independently at site-4 of sodium channels (Nav) and shift the voltage of activation toward more negative potentials thereby affecting sodium channel activation and promoting spontaneous and repetitive firing. This toxin is active only on insects. The protein is Insect toxin BsIT2 of Hottentotta tamulus sindicus (Scorpion).